The primary structure comprises 387 residues: Mannitol-1-phosphate 5-dehydrogenase (387 aa).

An NAD(+)-binding site is contributed by 3–14 (AVHFGAGNIGRG).

This sequence belongs to the mannitol dehydrogenase family.

The catalysed reaction is D-mannitol 1-phosphate + NAD(+) = beta-D-fructose 6-phosphate + NADH + H(+). The polypeptide is Mannitol-1-phosphate 5-dehydrogenase (Pseudarthrobacter chlorophenolicus (strain ATCC 700700 / DSM 12829 / CIP 107037 / JCM 12360 / KCTC 9906 / NCIMB 13794 / A6) (Arthrobacter chlorophenolicus)).